Consider the following 356-residue polypeptide: UDP-N-acetylglucosamine--N-acetylmuramyl-(pentapeptide) pyrophosphoryl-undecaprenol N-acetylglucosamine transferase (356 aa).

UDP-N-acetyl-alpha-D-glucosamine-binding residues include Arg166, Ser196, and Gln290.

The protein belongs to the glycosyltransferase 28 family. MurG subfamily.

The protein resides in the cell membrane. It carries out the reaction Mur2Ac(oyl-L-Ala-gamma-D-Glu-L-Lys-D-Ala-D-Ala)-di-trans,octa-cis-undecaprenyl diphosphate + UDP-N-acetyl-alpha-D-glucosamine = beta-D-GlcNAc-(1-&gt;4)-Mur2Ac(oyl-L-Ala-gamma-D-Glu-L-Lys-D-Ala-D-Ala)-di-trans,octa-cis-undecaprenyl diphosphate + UDP + H(+). Its pathway is cell wall biogenesis; peptidoglycan biosynthesis. Functionally, cell wall formation. Catalyzes the transfer of a GlcNAc subunit on undecaprenyl-pyrophosphoryl-MurNAc-pentapeptide (lipid intermediate I) to form undecaprenyl-pyrophosphoryl-MurNAc-(pentapeptide)GlcNAc (lipid intermediate II). This chain is UDP-N-acetylglucosamine--N-acetylmuramyl-(pentapeptide) pyrophosphoryl-undecaprenol N-acetylglucosamine transferase, found in Staphylococcus aureus (strain MW2).